We begin with the raw amino-acid sequence, 834 residues long: MQQQYNPSAIEPKVQQFWAENKVFKAVKDVTKEKYYCLSMLPYPSGKLHMGHVRNYTIGDVVSRYQRMIGKNVLQPMGWDAFGLPAEGAAVKNNTAPAKWTYENIEYMKGQLKMLGFSYDWDREVTTCRQEYYKWEQWFFTELYKKGLVYKKTSTVNWCPNDATVLANEQVHEGCCWRCDTPVEQREIPQWFIKITDYAEELLTHLDNLPQWPDQVKTMQRNWIGRSEGVEITFKIAGSNAELPVYTTRPDTFFGVSYVAIAAAHPLAEMAAENNPALAEFIREAKNTKVAEAELATMEKKGMATGLFAIHPLTGKEVPVWVANFVLMHYGTGAVMAVPAHDERDFEFAQKYGLQINQVIQPLDGSEWDFSKAAYTEHGKLINSAEFDDLNFEQAFNAIADKLESMKVGKRQVNFRLRDWGVSRQRYWGAPIPMMTTEDGEVVTVPMQDLPVILPEDVVMNGVQSPIKADPEWAKTTYNGKPALKETDTFDTFMESSWYYARYTCPQYHEGMLDSDEANYWLPVDQYIGGIEHATMHLLYFRFFHKLLRDAGILNSDEPATKLLCQGMVLADAFYYTSPTNERIWVSPTQVTLERDEKGRIIKATDPEGRELVHSGMTKMSKSKNNGIDPQEMVEKYGADTVRLFMMFASPAEMTLEWQESGVEGAKRFLGRVWNLVYEYSQNPATAALDVAALSKAQKELRRDVHKTIAKVSDDIGRRQTFNTAIAAIMELMNKLTKAPLENEQDKAVMAEALSAVVRMLYPITPHICFELWQALGNNDTIDFAPWVVADESAMVEDEKLVVVQVNGKVRVKLPFRQQQPKMKSKQLRKRMQT.

The short motif at 42-52 is the 'HIGH' region element; the sequence is PYPSGKLHMGH. The 'KMSKS' region motif lies at 619–623; it reads KMSKS. K622 provides a ligand contact to ATP.

Belongs to the class-I aminoacyl-tRNA synthetase family.

The protein resides in the cytoplasm. The enzyme catalyses tRNA(Leu) + L-leucine + ATP = L-leucyl-tRNA(Leu) + AMP + diphosphate. This chain is Leucine--tRNA ligase, found in Actinobacillus pleuropneumoniae serotype 7 (strain AP76).